The sequence spans 879 residues: Serine/threonine-protein kinase greatwall (879 aa).

Residue M1 is modified to N-acetylmethionine. The disordered stretch occupies residues 1 to 23 (MDPTAGSKKEPGGGAATEEGVNR). The region spanning 35–835 (FSIVKPISRG…MKELKRHPLF (801 aa)) is the Protein kinase domain. Residues 41 to 49 (ISRGAFGKV) and K62 contribute to the ATP site. D156 (proton acceptor) is an active-site residue. Residues T207 and T222 each carry the phosphothreonine modification. A phosphoserine mark is found at S293, S370, and S453. Position 519 is a phosphothreonine (T519). Residues S552 and S556 each carry the phosphoserine modification. The interval 566–632 (SMNSDSSFPG…VENPAVQESN (67 aa)) is disordered. The segment covering 589-598 (DSDRSIKESS) has biased composition (basic and acidic residues). 3 positions are modified to phosphoserine: S631, S657, and S668. Positions 700 to 728 (KRRSCMPHQQTPNQIKSGTPYRTPKSVRR) are disordered. Over residues 706–716 (PHQQTPNQIKS) the composition is skewed to polar residues. T722 bears the Phosphothreonine mark. The residue at position 725 (S725) is a Phosphoserine. T741 carries the post-translational modification Phosphothreonine. Residues 836-879 (SDVDWENLQHQTMPFIPQPDDETDTSYFEARNTAQHLTVSGFSL) enclose the AGC-kinase C-terminal domain. Phosphoserine is present on residues S875 and S878.

The protein belongs to the protein kinase superfamily. AGC Ser/Thr protein kinase family. Post-translationally, phosphorylation at Thr-741 by CDK1 during M phase activates its kinase activity. Maximum phosphorylation occurs in prometaphase.

It is found in the cytoplasm. It localises to the cytoskeleton. The protein resides in the microtubule organizing center. The protein localises to the centrosome. Its subcellular location is the nucleus. It is found in the cleavage furrow. It catalyses the reaction L-seryl-[protein] + ATP = O-phospho-L-seryl-[protein] + ADP + H(+). The enzyme catalyses L-threonyl-[protein] + ATP = O-phospho-L-threonyl-[protein] + ADP + H(+). Functionally, serine/threonine kinase that plays a key role in M phase by acting as a regulator of mitosis entry and maintenance. Acts by promoting the inactivation of protein phosphatase 2A (PP2A) during M phase: does not directly inhibit PP2A but acts by mediating phosphorylation and subsequent activation of ARPP19 and ENSA at 'Ser-62' and 'Ser-67', respectively. ARPP19 and ENSA are phosphatase inhibitors that specifically inhibit the PPP2R2D (PR55-delta) subunit of PP2A. Inactivation of PP2A during M phase is essential to keep cyclin-B1-CDK1 activity high. Following DNA damage, it is also involved in checkpoint recovery by being inhibited. Phosphorylates histone protein in vitro; however such activity is unsure in vivo. May be involved in megakaryocyte differentiation. In Homo sapiens (Human), this protein is Serine/threonine-protein kinase greatwall (MASTL).